The primary structure comprises 244 residues: Serine-rich single-pass membrane protein 1 (244 aa).

Residues 35 to 55 form a helical membrane-spanning segment; that stretch reads CGTIGNFLLWYFVIVFVLMFF. Disordered regions lie at residues 65–112, 132–191, and 213–244; these read DKKD…LTPV, QSQF…LGSY, and HSQQ…FSKF. The segment covering 80–94 has biased composition (basic and acidic residues); that stretch reads ASKETSYKWQSKDGA. Polar residues-rich tracts occupy residues 97–112 and 132–142; these read PSQT…LTPV and QSQFNEVNQNQ. Residues 161–176 show a composition bias toward basic and acidic residues; sequence SWKESESEHHPSPDSI. The segment covering 231-244 has biased composition (polar residues); it reads ESSISDINTKFSKF.

The protein resides in the membrane. This chain is Serine-rich single-pass membrane protein 1 (SSMEM1), found in Macaca fascicularis (Crab-eating macaque).